The chain runs to 381 residues: Succinyl-diaminopimelate desuccinylase (381 aa).

Residue histidine 71 participates in Zn(2+) binding. Aspartate 73 is an active-site residue. Aspartate 104 lines the Zn(2+) pocket. The active-site Proton acceptor is glutamate 138. Zn(2+) is bound by residues glutamate 139, glutamate 167, and histidine 353.

The protein belongs to the peptidase M20A family. DapE subfamily. Homodimer. It depends on Zn(2+) as a cofactor. Co(2+) is required as a cofactor.

The catalysed reaction is N-succinyl-(2S,6S)-2,6-diaminopimelate + H2O = (2S,6S)-2,6-diaminopimelate + succinate. It participates in amino-acid biosynthesis; L-lysine biosynthesis via DAP pathway; LL-2,6-diaminopimelate from (S)-tetrahydrodipicolinate (succinylase route): step 3/3. Its function is as follows. Catalyzes the hydrolysis of N-succinyl-L,L-diaminopimelic acid (SDAP), forming succinate and LL-2,6-diaminopimelate (DAP), an intermediate involved in the bacterial biosynthesis of lysine and meso-diaminopimelic acid, an essential component of bacterial cell walls. The chain is Succinyl-diaminopimelate desuccinylase from Shewanella halifaxensis (strain HAW-EB4).